The chain runs to 175 residues: Peptide deformylase (175 aa).

Cysteine 96 and histidine 138 together coordinate Fe cation. Glutamate 139 is an active-site residue. Histidine 142 is a binding site for Fe cation.

This sequence belongs to the polypeptide deformylase family. The cofactor is Fe(2+).

The enzyme catalyses N-terminal N-formyl-L-methionyl-[peptide] + H2O = N-terminal L-methionyl-[peptide] + formate. Removes the formyl group from the N-terminal Met of newly synthesized proteins. Requires at least a dipeptide for an efficient rate of reaction. N-terminal L-methionine is a prerequisite for activity but the enzyme has broad specificity at other positions. In Rhodopseudomonas palustris (strain ATCC BAA-98 / CGA009), this protein is Peptide deformylase.